A 261-amino-acid polypeptide reads, in one-letter code: Yop proteins translocation protein T (261 aa).

7 helical membrane passes run 20-40, 44-64, 77-97, 131-151, 180-200, 214-234, and 239-259; these read FMAC…GVLL, IVCS…YIEV, IILG…LESA, TLIT…ALFH, ILLI…LAEF, VFVL…VIYC, and SHAS…IPVL.

This sequence belongs to the FliR/MopE/SpaR family.

The protein localises to the cell membrane. In terms of biological role, component of the yop secretion machinery. The sequence is that of Yop proteins translocation protein T (yscT) from Yersinia pestis.